The following is a 1189-amino-acid chain: Disabled homolog 2-interacting protein (1189 aa).

Residues 1 to 75 (MSAGGNARKS…EPSASTPFRV (75 aa)) form a disordered region. Positions 20–38 (LLRRPRLQRQRSRSRSRTR) are enriched in basic residues. Residues 39–49 (PARESPQERPG) are compositionally biased toward basic and acidic residues. Over residues 59–73 (SEKNPSMEPSASTPF) the composition is skewed to polar residues. A PH domain is found at 101–202 (SFRHILPGFR…WMENLRRAVH (102 aa)). The C2 domain occupies 193–311 (WMENLRRAVH…AGRQFVEKWY (119 aa)). The Ras-GAP domain maps to 387 to 595 (GKVKDFLTDL…TNMQRFLLEI (209 aa)). Residues 646–943 (LRDVHTALST…RTPPTLLSTL (298 aa)) are necessary for interaction with AKT1. Over residues 653–668 (LSTPGSGQLPGTNDLA) the composition is skewed to polar residues. Disordered stretches follow at residues 653–679 (LSTP…SSVS) and 715–738 (RSSG…PDLQ). Residues 669-679 (STPGSGSSSVS) show a composition bias toward low complexity. The span at 715–731 (RSSGVQPSPARSSSYSE) shows a compositional bias: polar residues. The residue at position 728 (Ser-728) is a Phosphoserine; by MAP3K5 and RIPK1. Ser-747 carries the phosphoserine modification. Disordered stretches follow at residues 804–823 (VPTP…PQLL), 843–865 (PRGL…NSEE), 895–998 (SLTE…SPNA), 1015–1034 (EDEG…SKEE), and 1163–1189 (ARNG…SSNC). Residues 852–865 (EGHSSLSSHSNSEE) show a composition bias toward low complexity. The span at 919-931 (QPPPPPPPPPPAP) shows a compositional bias: pro residues. Composition is skewed to polar residues over residues 939–955 (LLST…TLAS) and 967–976 (LRQQSSSSKG). Residues Ser-978 and Ser-995 each carry the phosphoserine modification. The span at 1023 to 1034 (PPHRDRLRSKEE) shows a compositional bias: basic and acidic residues. Residues 1025–1159 (HRDRLRSKEE…SALTQLKERY (135 aa)) are a coiled coil.

In terms of assembly, on plasma membrane, exists in an inactive form complexed with TNFR1; in response to TNF-alpha, dissociates from TNFR1 complex, translocates to cytoplasm and forms part of an intracellular signaling complex comprising TRADD, RIPK1, TRAF2 and MAP3K5. Interacts with DAB1. Part of a cytoplasmic complex made of HIPK1, DAB2IP and MAP3K5 in response to TNF-alpha; this complex formation promotes MAP3K5-JNK activation and subsequent apoptosis. Interacts (via N-terminal domain) with JAK2; the interaction occurs in a IFNG/IFN-gamma-dependent manner and inhibits JAK2 autophosphorylation activity. Interacts (via C2 domain) with GSK3B; the interaction stimulates GSK3B kinase activation. Interacts (via C2 domain) with PPP2CA. Interacts (via proline-rich motif) with a regulatory p85 subunit (via SH3 domain) of the PI3K complex; the interaction inhibits the PI3K-AKT complex activity in a TNF-alpha-dependent manner in prostate cancer (PCa) cells. Interacts with AKT1; the interaction is increased in a TNF-alpha-induced manner. Interacts (via C2 domain and active form preferentially) with KDR/VEGFR2 (tyrosine-phosphorylated active form preferentially); the interaction occurs at the late phase of VEGFA response and inhibits KDR/VEGFR2 activity. Interacts (via N-terminus C2 domain) with MAP3K5 ('Ser-966' dephosphorylated form preferentially); the interaction occurs in a TNF-alpha-induced manner. Interacts (via Ras-GAP domain) with the catalytic subunit of protein phosphatase PP2A; the interaction occurs in resting endothelial cells, is further enhanced by TNF-alpha stimulation and is required to bridge PP2A to MAP3K5. Interacts (via C-terminus PER domain) with TRAF2 (via zinc fingers); the interaction occurs in a TNF-alpha-dependent manner. Interacts with 14-3-3 proteins; the interaction occurs in a TNF-alpha-dependent manner. Interacts (via Ras-GAP domain) with RIPK1 (via kinase domain); the interaction occurs in a TNF-alpha-dependent manner. Interacts (via PH domain) with ERN1. Interacts with TRAF2. Interacts (via NPXY motif) with DAB2 (via PID domain). Interacts with RAB40C; acts as a GAP for RAB40C. Post-translationally, in response to TNF-alpha-induction, phosphorylated at Ser-728; phosphorylation leads to a conformational change, and thus, increases its association with 14-3-3 proteins, MAP3K5, RIPK1 and TRAF2 in endothelial cells; also stimulates regulatory p85 subunit sequestring and PI3K-p85 complex activity inhibition. Expressed in vascular endothelium of muscle and aorta, in smooth muscle cells of aorta and epithelial cells of lung. Expressed throughout the brain, including olfactory bulb, hypothalamus, cerebellum and cerebral cortex. Expressed in the soma and processes of neurons in a variety of brain structures, including the developing cerebral cortex, CA1 pyramidal neurons and Purkinje cells. Poorly expressed in medulloblastoma cells compared to cerebellar precursor proliferating progenitor cells (at protein level). Highly expressed in the brain, salivary gland, and testis; moderate expression in kidney and heart. Low expression in the lung, seminal vesicle, ventral prostate, epididymis, liver, and bladder. Very low expression in the coagulation gland and skeleton muscles. Lowest expression seen in spleen.

The protein localises to the cytoplasm. Its subcellular location is the cell membrane. It is found in the membrane. It localises to the cell projection. The protein resides in the dendrite. Functionally, functions as a scaffold protein implicated in the regulation of a large spectrum of both general and specialized signaling pathways. Involved in several processes such as innate immune response, inflammation and cell growth inhibition, apoptosis, cell survival, angiogenesis, cell migration and maturation. Also plays a role in cell cycle checkpoint control; reduces G1 phase cyclin levels resulting in G0/G1 cell cycle arrest. Mediates signal transduction by receptor-mediated inflammatory signals, such as the tumor necrosis factor (TNF), interferon (IFN) or lipopolysaccharide (LPS). Modulates the balance between phosphatidylinositol 3-kinase (PI3K)-AKT-mediated cell survival and apoptosis stimulated kinase (MAP3K5)-JNK signaling pathways; sequesters both AKT1 and MAP3K5 and counterbalances the activity of each kinase by modulating their phosphorylation status in response to pro-inflammatory stimuli. Acts as a regulator of the endoplasmic reticulum (ER) unfolded protein response (UPR) pathway; specifically involved in transduction of the ER stress-response to the JNK cascade through ERN1. Mediates TNF-alpha-induced apoptosis activation by facilitating dissociation of inhibitor 14-3-3 from MAP3K5; recruits the PP2A phosphatase complex which dephosphorylates MAP3K5 on 'Ser-966', leading to the dissociation of 13-3-3 proteins and activation of the MAP3K5-JNK signaling pathway in endothelial cells. Also mediates TNF/TRAF2-induced MAP3K5-JNK activation, while it inhibits CHUK-NF-kappa-B signaling. Acts a negative regulator in the IFN-gamma-mediated JAK-STAT signaling cascade by inhibiting smooth muscle cell (VSMCs) proliferation and intimal expansion, and thus, prevents graft arteriosclerosis (GA). Acts as a GTPase-activating protein (GAP) for the ADP ribosylation factor 6 (ARF6) and Ras. Promotes hydrolysis of the ARF6-bound GTP and thus, negatively regulates phosphatidylinositol 4,5-bisphosphate (PIP2)-dependent TLR4-TIRAP-MyD88 and NF-kappa-B signaling pathways in endothelial cells in response to lipopolysaccharides (LPS). Binds specifically to phosphatidylinositol 4-phosphate (PtdIns4P) and phosphatidylinositol 3-phosphate (PtdIns3P). In response to vascular endothelial growth factor (VEGFA), acts as a negative regulator of the VEGFR2-PI3K-mediated angiogenic signaling pathway by inhibiting endothelial cell migration and tube formation. In the developing brain, promotes both the transition from the multipolar to the bipolar stage and the radial migration of cortical neurons from the ventricular zone toward the superficial layer of the neocortex in a glial-dependent locomotion process. Probable downstream effector of the Reelin signaling pathway; promotes Purkinje cell (PC) dendrites development and formation of cerebellar synapses. Also functions as a tumor suppressor protein in prostate cancer progression; prevents cell proliferation and epithelial-to-mesenchymal transition (EMT) through activation of the glycogen synthase kinase-3 beta (GSK3B)-induced beta-catenin and inhibition of PI3K-AKT and Ras-MAPK survival downstream signaling cascades, respectively. This chain is Disabled homolog 2-interacting protein (Dab2ip), found in Mus musculus (Mouse).